The sequence spans 759 residues: Multifunctional tryptophan biosynthesis protein (759 aa).

One can recognise a Glutamine amidotransferase type-1 domain in the interval 27-223 (PIVMIDNYDS…LNLTAGTWEE (197 aa)). Residue 80–82 (GPG) participates in L-glutamine binding. Cys108 functions as the Nucleophile; for GATase activity in the catalytic mechanism. Residues Gln112 and 158–159 (SL) contribute to the L-glutamine site. Catalysis depends on for GATase activity residues His197 and Glu199. The segment at 257-519 (ILEKIHAQRL…DPAAFARELL (263 aa)) is indole-3-glycerol phosphate synthase. The tract at residues 536–759 (LVKVCGTRSL…KAFINAVKEL (224 aa)) is N-(5'-phosphoribosyl)anthranilate isomerase.

The enzyme catalyses N-(5-phospho-beta-D-ribosyl)anthranilate = 1-(2-carboxyphenylamino)-1-deoxy-D-ribulose 5-phosphate. It catalyses the reaction 1-(2-carboxyphenylamino)-1-deoxy-D-ribulose 5-phosphate + H(+) = (1S,2R)-1-C-(indol-3-yl)glycerol 3-phosphate + CO2 + H2O. The catalysed reaction is chorismate + L-glutamine = anthranilate + pyruvate + L-glutamate + H(+). It participates in amino-acid biosynthesis; L-tryptophan biosynthesis; L-tryptophan from chorismate: step 1/5. Its pathway is amino-acid biosynthesis; L-tryptophan biosynthesis; L-tryptophan from chorismate: step 3/5. It functions in the pathway amino-acid biosynthesis; L-tryptophan biosynthesis; L-tryptophan from chorismate: step 4/5. Functionally, trifunctional enzyme bearing the Gln amidotransferase (GATase) domain of anthranilate synthase, indole-glycerolphosphate synthase, and phosphoribosylanthranilate isomerase activities. The chain is Multifunctional tryptophan biosynthesis protein (trp1) from Schizosaccharomyces pombe (strain 972 / ATCC 24843) (Fission yeast).